Here is a 24-residue protein sequence, read N- to C-terminus: Heptapoietin A light chain (24 aa).

As to quaternary structure, heterodimer of a heavy and a light chain linked by disulfide bond(s).

Functionally, HPTA is an acidic heparin-binding growth factor for hepatocytes. The sequence is that of Heptapoietin A light chain from Oryctolagus cuniculus (Rabbit).